Here is a 267-residue protein sequence, read N- to C-terminus: 3-methyl-2-oxobutanoate hydroxymethyltransferase (267 aa).

2 residues coordinate Mg(2+): D46 and D85. Residues 46–47 (DS), D85, and K115 each bind 3-methyl-2-oxobutanoate. E117 is a Mg(2+) binding site. E184 acts as the Proton acceptor in catalysis.

It belongs to the PanB family. As to quaternary structure, homodecamer; pentamer of dimers. The cofactor is Mg(2+).

Its subcellular location is the cytoplasm. It carries out the reaction 3-methyl-2-oxobutanoate + (6R)-5,10-methylene-5,6,7,8-tetrahydrofolate + H2O = 2-dehydropantoate + (6S)-5,6,7,8-tetrahydrofolate. It participates in cofactor biosynthesis; (R)-pantothenate biosynthesis; (R)-pantoate from 3-methyl-2-oxobutanoate: step 1/2. Catalyzes the reversible reaction in which hydroxymethyl group from 5,10-methylenetetrahydrofolate is transferred onto alpha-ketoisovalerate to form ketopantoate. The sequence is that of 3-methyl-2-oxobutanoate hydroxymethyltransferase from Syntrophotalea carbinolica (strain DSM 2380 / NBRC 103641 / GraBd1) (Pelobacter carbinolicus).